A 307-amino-acid chain; its full sequence is Ribonuclease Z (307 aa).

Residues His-61, His-63, Asp-65, His-66, His-138, Asp-208, and His-264 each contribute to the Zn(2+) site. Asp-65 (proton acceptor) is an active-site residue.

This sequence belongs to the RNase Z family. As to quaternary structure, homodimer. The cofactor is Zn(2+).

It catalyses the reaction Endonucleolytic cleavage of RNA, removing extra 3' nucleotides from tRNA precursor, generating 3' termini of tRNAs. A 3'-hydroxy group is left at the tRNA terminus and a 5'-phosphoryl group is left at the trailer molecule.. Functionally, zinc phosphodiesterase, which displays some tRNA 3'-processing endonuclease activity. Probably involved in tRNA maturation, by removing a 3'-trailer from precursor tRNA. The chain is Ribonuclease Z from Pyrococcus abyssi (strain GE5 / Orsay).